We begin with the raw amino-acid sequence, 61 residues long: MRCMRGGWGRGWKRRCYSTGKPGWMRYESERDEKLRMLERMRDELEAELEEIKREIERLRR.

Positions 24 to 60 (WMRYESERDEKLRMLERMRDELEAELEEIKREIERLR) form a coiled coil.

This is an uncharacterized protein from Archaeoglobus fulgidus (strain ATCC 49558 / DSM 4304 / JCM 9628 / NBRC 100126 / VC-16).